The primary structure comprises 188 residues: Mitochondrial import receptor subunit TOM20-1 (188 aa).

Residues 1-164 (MDKLNFFEEI…VVKNKKSSDE (164 aa)) lie on the Cytoplasmic side of the membrane. A helical membrane pass occupies residues 165-182 (KYIVMGWVILAIGVVACI). Topologically, residues 183-188 (SFRKLR) are mitochondrial intermembrane.

It belongs to the Tom20 family. As to quaternary structure, forms part of the preprotein translocase complex of the outer mitochondrial membrane (TOM complex) which consists of at least 6 different proteins (TOM5, TOM6, TOM7, TOM20, TOM22/TOM9 and TOM40). Component of a mitochondrial large protein complex that contains, at least, MIC60, DGS1, TOM40, TOM20 proteins, and petC/RISP. As to expression, barely detected in roots.

Its subcellular location is the mitochondrion outer membrane. In terms of biological role, central component of the receptor complex responsible for the recognition and translocation of cytosolically synthesized mitochondrial preproteins. Together with TOM22 functions as the transit peptide receptor at the surface of the mitochondrion outer membrane and facilitates the movement of preproteins into the translocation pore. In Arabidopsis thaliana (Mouse-ear cress), this protein is Mitochondrial import receptor subunit TOM20-1.